The primary structure comprises 605 residues: Leucine-rich repeat-containing protein 40 (605 aa).

A disordered region spans residues 1–21 (MSRFKRGGKAPDPLSGFRAPK). 19 LRR repeats span residues 83–104 (DLTK…ISLL), 106–127 (ALVV…IREL), 129–151 (NLQK…QHLQ), 152–173 (NLKS…IGHL), 175–196 (ILEE…VGQL), 198–219 (GLVK…IGKM), 221–242 (NLRQ…VAGM), 244–265 (SLEQ…PFLT), 266–287 (KLKE…HLQN), 290–311 (SLSV…ISLL), 313–335 (GLER…GSLP), 336–357 (NLKS…ILNK), 429–450 (PITT…IVEM), 453–475 (SVYD…CMLL), 476–497 (KLTH…MEAL), 499–520 (RLQS…LYTI), 522–543 (NLET…QLKK), 546–567 (KLST…LGNC), and 569–590 (SLRA…ILAK).

The protein is Leucine-rich repeat-containing protein 40 (lrrc40) of Xenopus laevis (African clawed frog).